Here is a 106-residue protein sequence, read N- to C-terminus: Putative membrane protein insertion efficiency factor (106 aa).

It belongs to the UPF0161 family.

The protein resides in the cell inner membrane. In terms of biological role, could be involved in insertion of integral membrane proteins into the membrane. The chain is Putative membrane protein insertion efficiency factor from Acinetobacter baumannii (strain AB307-0294).